The sequence spans 348 residues: D-alanine--D-alanine ligase (348 aa).

Positions 132–334 (KRVLESIGIP…YPDLIEELVT (203 aa)) constitute an ATP-grasp domain. Position 162-217 (162-217 (LARLTFPIFVKPANMGSSVGISKAQTKVELRKAIQLALTYDSRVLIEQGVVAREIE)) interacts with ATP. Residues Asp288, Glu301, and Asn303 each coordinate Mg(2+).

It belongs to the D-alanine--D-alanine ligase family. The cofactor is Mg(2+). Mn(2+) serves as cofactor.

The protein resides in the cytoplasm. It carries out the reaction 2 D-alanine + ATP = D-alanyl-D-alanine + ADP + phosphate + H(+). It functions in the pathway cell wall biogenesis; peptidoglycan biosynthesis. Cell wall formation. The chain is D-alanine--D-alanine ligase from Streptococcus pyogenes serotype M18 (strain MGAS8232).